Here is a 505-residue protein sequence, read N- to C-terminus: Glycerol kinase (505 aa).

Thr-15 provides a ligand contact to ADP. ATP-binding residues include Thr-15, Thr-16, and Ser-17. Residue Thr-15 coordinates sn-glycerol 3-phosphate. Arg-19 is an ADP binding site. The sn-glycerol 3-phosphate site is built by Arg-85, Glu-86, Tyr-136, and Asp-249. Positions 85, 86, 136, 249, and 250 each coordinate glycerol. ADP is bound by residues Thr-271 and Gly-314. ATP is bound by residues Thr-271, Gly-314, Gln-318, and Gly-415. 2 residues coordinate ADP: Gly-415 and Asn-419.

Belongs to the FGGY kinase family.

It carries out the reaction glycerol + ATP = sn-glycerol 3-phosphate + ADP + H(+). It functions in the pathway polyol metabolism; glycerol degradation via glycerol kinase pathway; sn-glycerol 3-phosphate from glycerol: step 1/1. Its activity is regulated as follows. Inhibited by fructose 1,6-bisphosphate (FBP). Functionally, key enzyme in the regulation of glycerol uptake and metabolism. Catalyzes the phosphorylation of glycerol to yield sn-glycerol 3-phosphate. In Mycoplasma capricolum subsp. capricolum (strain California kid / ATCC 27343 / NCTC 10154), this protein is Glycerol kinase.